The chain runs to 202 residues: Riboflavin synthase (202 aa).

Lumazine-binding repeat units lie at residues 1-101 (MFTG…MGGH) and 102-198 (LVFG…ARLA). Residues 4–6 (GII), 47–49 (CLT), 66–68 (EAW), 105–107 (GHV), lysine 140, 149–151 (SLT), and 163–168 (LLIRHS) each bind 2,4-dihydroxypteridine.

As to quaternary structure, homotrimer.

The enzyme catalyses 2 6,7-dimethyl-8-(1-D-ribityl)lumazine + H(+) = 5-amino-6-(D-ribitylamino)uracil + riboflavin. It participates in cofactor biosynthesis; riboflavin biosynthesis; riboflavin from 2-hydroxy-3-oxobutyl phosphate and 5-amino-6-(D-ribitylamino)uracil: step 2/2. Its activity is regulated as follows. Is inhibited by riboflavin. Product inhibition may be the major mechanism by which RS regulates its enzymatic activity in vivo. In terms of biological role, catalyzes the dismutation of two molecules of 6,7-dimethyl-8-ribityllumazine, resulting in the formation of riboflavin and 5-amino-6-(D-ribitylamino)uracil. This chain is Riboflavin synthase, found in Brucella abortus (strain 2308).